A 175-amino-acid chain; its full sequence is CDP-archaeol synthase (175 aa).

A run of 4 helical transmembrane segments spans residues 41 to 61 (GFFVGLIFGALAGLMQMQLLE), 82 to 102 (TILIFALAVGSLFGDMFMSFF), 122 to 142 (FVLGALIFAYLASPVWFAEQF), and 147 to 167 (IAVILIITPLLHLATNVVGYF).

The protein belongs to the CDP-archaeol synthase family. The cofactor is Mg(2+).

The protein resides in the cell membrane. It catalyses the reaction 2,3-bis-O-(geranylgeranyl)-sn-glycerol 1-phosphate + CTP + H(+) = CDP-2,3-bis-O-(geranylgeranyl)-sn-glycerol + diphosphate. It participates in membrane lipid metabolism; glycerophospholipid metabolism. Its function is as follows. Catalyzes the formation of CDP-2,3-bis-(O-geranylgeranyl)-sn-glycerol (CDP-archaeol) from 2,3-bis-(O-geranylgeranyl)-sn-glycerol 1-phosphate (DGGGP) and CTP. This reaction is the third ether-bond-formation step in the biosynthesis of archaeal membrane lipids. This is CDP-archaeol synthase from Methanococcoides burtonii (strain DSM 6242 / NBRC 107633 / OCM 468 / ACE-M).